The following is a 1068-amino-acid chain: Integrator complex subunit 3 homolog (1068 aa).

Disordered regions lie at residues 916 to 939 (YPSS…STPS) and 1001 to 1068 (VGRR…NDSD). 4 positions are modified to phosphoserine: Ser1038, Ser1039, Ser1043, and Ser1044.

This sequence belongs to the Integrator subunit 3 family. As to quaternary structure, belongs to the multiprotein complex Integrator, at least composed of IntS1, IntS2, IntS3, IntS4, omd/IntS5, IntS6, defl/IntS7, IntS8, IntS9, IntS10, IntS11, IntS12, asun/IntS13, IntS14 and IntS15. The core complex associates with protein phosphatase 2A subunits mts/PP2A and Pp2A-29B, to form the Integrator-PP2A (INTAC) complex.

It localises to the nucleus. Its subcellular location is the cytoplasm. Component of the integrator complex, a multiprotein complex that terminates RNA polymerase II (Pol II) transcription in the promoter-proximal region of genes. The integrator complex provides a quality checkpoint during transcription elongation by driving premature transcription termination of transcripts that are unfavorably configured for transcriptional elongation: the complex terminates transcription by (1) catalyzing dephosphorylation of the C-terminal domain (CTD) of Pol II subunit Polr2A/Rbp1 and Spt5, and (2) degrading the exiting nascent RNA transcript via endonuclease activity. The integrator complex is also involved in the 3'-end processing of the U7 snRNA, and also the spliceosomal snRNAs U1, U2, U4 and U5. This is Integrator complex subunit 3 homolog (IntS3) from Drosophila sechellia (Fruit fly).